Reading from the N-terminus, the 383-residue chain is Acetylornithine deacetylase (383 aa).

His-80 is a Zn(2+) binding site. Asp-82 is an active-site residue. Asp-112 contacts Zn(2+). Glu-144 is a catalytic residue. 3 residues coordinate Zn(2+): Glu-145, Glu-169, and His-355.

It belongs to the peptidase M20A family. ArgE subfamily. As to quaternary structure, homodimer. The cofactor is Zn(2+). It depends on Co(2+) as a cofactor. Requires glutathione as cofactor.

The protein resides in the cytoplasm. It carries out the reaction N(2)-acetyl-L-ornithine + H2O = L-ornithine + acetate. It functions in the pathway amino-acid biosynthesis; L-arginine biosynthesis; L-ornithine from N(2)-acetyl-L-ornithine (linear): step 1/1. Catalyzes the hydrolysis of the amide bond of N(2)-acetylated L-amino acids. Cleaves the acetyl group from N-acetyl-L-ornithine to form L-ornithine, an intermediate in L-arginine biosynthesis pathway, and a branchpoint in the synthesis of polyamines. The polypeptide is Acetylornithine deacetylase (Salmonella agona (strain SL483)).